Consider the following 218-residue polypeptide: NADH dehydrogenase [ubiquinone] iron-sulfur protein 7, mitochondrial (218 aa).

Low complexity predominate over residues 34–48 (LPALSPSTSPTSYTR). The interval 34–61 (LPALSPSTSPTSYTRPGPPSTSPPPPGL) is disordered. Over residues 49 to 60 (PGPPSTSPPPPG) the composition is skewed to pro residues. Positions 93, 94, 158, and 188 each coordinate [4Fe-4S] cluster.

The protein belongs to the complex I 20 kDa subunit family. Complex I is composed of at least 49 different subunits. This is a component of the iron-sulfur (IP) fragment of the enzyme. Requires [4Fe-4S] cluster as cofactor.

Its subcellular location is the mitochondrion. The enzyme catalyses a ubiquinone + NADH + 5 H(+)(in) = a ubiquinol + NAD(+) + 4 H(+)(out). Functionally, core subunit of the mitochondrial membrane respiratory chain NADH dehydrogenase (Complex I) that is believed to belong to the minimal assembly required for catalysis. Complex I functions in the transfer of electrons from NADH to the respiratory chain. The immediate electron acceptor for the enzyme is believed to be ubiquinone. This chain is NADH dehydrogenase [ubiquinone] iron-sulfur protein 7, mitochondrial, found in Arabidopsis thaliana (Mouse-ear cress).